The chain runs to 345 residues: Inositol 2-dehydrogenase (345 aa).

This sequence belongs to the Gfo/Idh/MocA family. Homotetramer.

The enzyme catalyses myo-inositol + NAD(+) = scyllo-inosose + NADH + H(+). Its function is as follows. Involved in the oxidation of myo-inositol (MI) to 2-keto-myo-inositol (2KMI or 2-inosose). The protein is Inositol 2-dehydrogenase of Mycolicibacterium smegmatis (strain ATCC 700084 / mc(2)155) (Mycobacterium smegmatis).